Reading from the N-terminus, the 81-residue chain is Trefoil factor 3 (81 aa).

The N-terminal stretch at 1–23 (MEARTFWLLVVAVLALGSSSSTG) is a signal peptide. Positions 31 to 74 (NQCAVPAKDRVDCGYPEVTPEQCNNRGCCFDSSIHGVPWCFKPL) constitute a P-type domain. 3 cysteine pairs are disulfide-bonded: C33/C59, C43/C58, and C53/C70.

As to quaternary structure, monomer. Homodimer; disulfide-linked.

Its subcellular location is the secreted. It is found in the extracellular space. The protein localises to the extracellular matrix. The protein resides in the cytoplasm. Involved in the maintenance and repair of the intestinal mucosa. Promotes the mobility of epithelial cells in healing processes (motogen). The polypeptide is Trefoil factor 3 (TFF3) (Bos taurus (Bovine)).